Here is a 307-residue protein sequence, read N- to C-terminus: NAD kinase 2 (307 aa).

Aspartate 77 (proton acceptor) is an active-site residue. Residues 77-78 (DG), 151-152 (NE), aspartate 181, 192-197 (TAYALS), and asparagine 251 contribute to the NAD(+) site.

It belongs to the NAD kinase family. Requires a divalent metal cation as cofactor.

The protein localises to the cytoplasm. The enzyme catalyses NAD(+) + ATP = ADP + NADP(+) + H(+). Its function is as follows. Involved in the regulation of the intracellular balance of NAD and NADP, and is a key enzyme in the biosynthesis of NADP. Catalyzes specifically the phosphorylation on 2'-hydroxyl of the adenosine moiety of NAD to yield NADP. This Thermosynechococcus vestitus (strain NIES-2133 / IAM M-273 / BP-1) protein is NAD kinase 2.